Consider the following 458-residue polypeptide: MSAGKIVQVIGAVVDVEFPRDQVPQIYDALVVDERGLTLEVQQQLGDGVVRTIAMGSSDGLTRSEKVSNTGNPISVPVGQGTLGRIMDVLGEPVDEAGEVKTDERWSIHRNAPSYEEQSGGQELLETGIKVIDLLCPFAKGGKVGLFGGAGVGKTVNMMELIRNIAVEHSGYSVFAGVGERTREGNDFYHEMKDSNVLDKVSLVYGQMNEPPGNRLRVALTGLTMAEYFRDEGRDVLMFIDNIYRYTLAGQEVSALLGRMPSAVGYQPTLAEEMGKLQERITSTKTGSITSVQAVYVPADDLTDPAPATTFAHLDATIVLSRQIAELGIYPAVDPLDSTSRQLDPLVIGQEHYDVARGVQGVLQRYKELKDIIAILGMDELSEEDKLTVSRARKIQRFLSQPFFVAEVFTGMPGKYVSLKDTVASFKAIIDGEYDHLPEQAFYMVGTVEEAAEKAKNL.

Position 148–155 (148–155 (GGAGVGKT)) interacts with ATP.

The protein belongs to the ATPase alpha/beta chains family. As to quaternary structure, F-type ATPases have 2 components, CF(1) - the catalytic core - and CF(0) - the membrane proton channel. CF(1) has five subunits: alpha(3), beta(3), gamma(1), delta(1), epsilon(1). CF(0) has three main subunits: a(1), b(2) and c(9-12). The alpha and beta chains form an alternating ring which encloses part of the gamma chain. CF(1) is attached to CF(0) by a central stalk formed by the gamma and epsilon chains, while a peripheral stalk is formed by the delta and b chains.

It is found in the cell inner membrane. The enzyme catalyses ATP + H2O + 4 H(+)(in) = ADP + phosphate + 5 H(+)(out). In terms of biological role, produces ATP from ADP in the presence of a proton gradient across the membrane. The catalytic sites are hosted primarily by the beta subunits. The polypeptide is ATP synthase subunit beta (Halorhodospira halophila (strain DSM 244 / SL1) (Ectothiorhodospira halophila (strain DSM 244 / SL1))).